A 405-amino-acid polypeptide reads, in one-letter code: NADH-quinone oxidoreductase subunit D (405 aa).

Belongs to the complex I 49 kDa subunit family. As to quaternary structure, NDH-1 is composed of 14 different subunits. Subunits NuoB, C, D, E, F, and G constitute the peripheral sector of the complex.

The protein resides in the cell inner membrane. It catalyses the reaction a quinone + NADH + 5 H(+)(in) = a quinol + NAD(+) + 4 H(+)(out). Functionally, NDH-1 shuttles electrons from NADH, via FMN and iron-sulfur (Fe-S) centers, to quinones in the respiratory chain. The immediate electron acceptor for the enzyme in this species is believed to be ubiquinone. Couples the redox reaction to proton translocation (for every two electrons transferred, four hydrogen ions are translocated across the cytoplasmic membrane), and thus conserves the redox energy in a proton gradient. The protein is NADH-quinone oxidoreductase subunit D of Afipia carboxidovorans (strain ATCC 49405 / DSM 1227 / KCTC 32145 / OM5) (Oligotropha carboxidovorans).